The chain runs to 644 residues: Exoribonuclease 2 (644 aa).

Residues Arg-189–Lys-516 enclose the RNB domain. The S1 motif domain maps to Asp-561–Val-643.

It belongs to the RNR ribonuclease family. RNase II subfamily.

The protein localises to the cytoplasm. The enzyme catalyses Exonucleolytic cleavage in the 3'- to 5'-direction to yield nucleoside 5'-phosphates.. Its function is as follows. Involved in mRNA degradation. Hydrolyzes single-stranded polyribonucleotides processively in the 3' to 5' direction. In Escherichia coli O8 (strain IAI1), this protein is Exoribonuclease 2.